Here is a 937-residue protein sequence, read N- to C-terminus: AP-2 complex subunit beta (937 aa).

Threonine 2 carries the post-translational modification N-acetylthreonine. The residue at position 4 (serine 4) is a Phosphoserine. Position 265 is an N6-acetyllysine (lysine 265). 2 positions are modified to phosphotyrosine: tyrosine 737 and tyrosine 928.

This sequence belongs to the adaptor complexes large subunit family. As to quaternary structure, adapter protein complex 2 (AP-2) is a heterotetramer composed of two large adaptins (alpha-type subunit AP2A1 or AP2A2 and beta-type subunit AP2B1), a medium adaptin (mu-type subunit AP2M1) and a small adaptin (sigma-type subunit AP2S1). Interacts with EPN1. Interacts with EPS15; clathrin competes with EPS15. Interacts with SNAP91; clathrin competes with SNAP91. Interacts with CLTC; clathrin competes with EPS15, SNAP91 and PIP5K1C. Interacts with LDLRAP1. Interacts with AMPH and BIN1. Interacts with ARF6 (GDP-bound). Interacts (dephosphorylated at Tyr-737) with ARRB1; phosphorylation of AP2B1 at Tyr-737 disrupts the interaction. Interacts with SLC2A8. Interacts with SCYL1 and SCYL2. Interacts with TGFBR1 and TGFBR2. Interacts with PIP5K1C; clathrin competes with PIP5K1C. Interacts with DENND1B. Interacts with FCHO1. Interacts with RFTN1. Interacts with KIAA1107. Together with AP2A1 or AP2A2 and AP2M1, it interacts with ADAM10; this interaction facilitates ADAM10 endocytosis from the plasma membrane during long-term potentiation in hippocampal neurons. In terms of processing, the N-terminus is blocked. Phosphorylation at Tyr-737 by SRC occurs at the plasma membrane in clathrin-coated vesicles (CCVs).

The protein resides in the cell membrane. Its subcellular location is the membrane. It localises to the coated pit. In terms of biological role, component of the adaptor protein complex 2 (AP-2). Adaptor protein complexes function in protein transport via transport vesicles in different membrane traffic pathways. Adaptor protein complexes are vesicle coat components and appear to be involved in cargo selection and vesicle formation. AP-2 is involved in clathrin-dependent endocytosis in which cargo proteins are incorporated into vesicles surrounded by clathrin (clathrin-coated vesicles, CCVs) which are destined for fusion with the early endosome. The clathrin lattice serves as a mechanical scaffold but is itself unable to bind directly to membrane components. Clathrin-associated adaptor protein (AP) complexes which can bind directly to both the clathrin lattice and to the lipid and protein components of membranes are considered to be the major clathrin adaptors contributing the CCV formation. AP-2 also serves as a cargo receptor to selectively sort the membrane proteins involved in receptor-mediated endocytosis. AP-2 seems to play a role in the recycling of synaptic vesicle membranes from the presynaptic surface. AP-2 recognizes Y-X-X-[FILMV] (Y-X-X-Phi) and [ED]-X-X-X-L-[LI] endocytosis signal motifs within the cytosolic tails of transmembrane cargo molecules. AP-2 may also play a role in maintaining normal post-endocytic trafficking through the ARF6-regulated, non-clathrin pathway. During long-term potentiation in hippocampal neurons, AP-2 is responsible for the endocytosis of ADAM10. The AP-2 beta subunit acts via its C-terminal appendage domain as a scaffolding platform for endocytic accessory proteins; at least some clathrin-associated sorting proteins (CLASPs) are recognized by their [DE]-X(1,2)-F-X-X-[FL]-X-X-X-R motif. The AP-2 beta subunit binds to clathrin heavy chain, promoting clathrin lattice assembly; clathrin displaces at least some CLASPs from AP2B1 which probably then can be positioned for further coat assembly. The polypeptide is AP-2 complex subunit beta (AP2B1) (Bos taurus (Bovine)).